The sequence spans 265 residues: Mlc titration factor A (265 aa).

Zn(2+) is bound by residues histidine 111, histidine 148, histidine 152, and glutamate 211.

The protein belongs to the MtfA family. In terms of assembly, interacts with Mlc. Zn(2+) is required as a cofactor.

It is found in the cytoplasm. Functionally, involved in the modulation of the activity of the glucose-phosphotransferase system (glucose-PTS). Interacts with the transcriptional repressor Mlc, preventing its interaction with DNA and leading to the modulation of expression of genes regulated by Mlc, including ptsG, which encodes the PTS system glucose-specific EIICB component. Shows zinc-dependent metallopeptidase activity. This is Mlc titration factor A from Escherichia fergusonii.